The chain runs to 149 residues: SsrA-binding protein (149 aa).

Belongs to the SmpB family.

The protein resides in the cytoplasm. Required for rescue of stalled ribosomes mediated by trans-translation. Binds to transfer-messenger RNA (tmRNA), required for stable association of tmRNA with ribosomes. tmRNA and SmpB together mimic tRNA shape, replacing the anticodon stem-loop with SmpB. tmRNA is encoded by the ssrA gene; the 2 termini fold to resemble tRNA(Ala) and it encodes a 'tag peptide', a short internal open reading frame. During trans-translation Ala-aminoacylated tmRNA acts like a tRNA, entering the A-site of stalled ribosomes, displacing the stalled mRNA. The ribosome then switches to translate the ORF on the tmRNA; the nascent peptide is terminated with the 'tag peptide' encoded by the tmRNA and targeted for degradation. The ribosome is freed to recommence translation, which seems to be the essential function of trans-translation. The sequence is that of SsrA-binding protein from Carboxydothermus hydrogenoformans (strain ATCC BAA-161 / DSM 6008 / Z-2901).